A 481-amino-acid polypeptide reads, in one-letter code: Cerebral cavernous malformations 2 protein-like (481 aa).

Disordered regions lie at residues 161 to 193 and 214 to 290; these read PVPA…GTAE and EARA…DPQN. Residues 184–193 are compositionally biased toward basic and acidic residues; the sequence is PEKRRVGTAE. Residues 214–223 are compositionally biased toward gly residues; the sequence is EARAAGGGGS. A compositionally biased stretch (basic and acidic residues) spans 237 to 251; sequence WERRQTFSGSWERRH.

This sequence belongs to the CCM2 family.

In Mus musculus (Mouse), this protein is Cerebral cavernous malformations 2 protein-like (Ccm2l).